We begin with the raw amino-acid sequence, 730 residues long: ABC transporter G family member 3 (730 aa).

Residues 1-28 show a composition bias toward low complexity; sequence MEEIQSQSDLYRSSSSSASSPTSRVPSS. Positions 1–100 are disordered; the sequence is MEEIQSQSDL…MASPPVPEGG (100 aa). A compositionally biased stretch (acidic residues) spans 47-56; that stretch reads DSPEWEDTPD. The span at 72 to 91 shows a compositional bias: polar residues; the sequence is NDATTTPVSPSLSKMNSGSM. Phosphoserine is present on Ser-93. Residues 114–356 enclose the ABC transporter domain; the sequence is IAWKDLTVTM…FSNAGFPCPI (243 aa). Residue 151–158 participates in ATP binding; it reads GPAKSGKS. Positions 441-653 constitute an ABC transmembrane type-2 domain; it reads TRVAVLTWRS…SIEGLLENEY (213 aa). The next 6 membrane-spanning stretches (helical) occupy residues 465–485, 495–515, 532–552, 575–595, 600–620, and 689–709; these read LILY…LGHS, AVFV…PSLL, AFVF…LMSI, VLNF…IACI, YWST…AGHF, and MLVL…LLRF.

It belongs to the ABC transporter superfamily. ABCG family. Eye pigment precursor importer (TC 3.A.1.204) subfamily.

The protein localises to the membrane. This Arabidopsis thaliana (Mouse-ear cress) protein is ABC transporter G family member 3 (ABCG3).